The sequence spans 215 residues: Sperm acrosome membrane-associated protein 3 (215 aa).

At 1-63 (MVSALRGAPL…EARSRALRRR (63 aa)) the chain is on the cytoplasmic side. A helical; Signal-anchor for type II membrane protein transmembrane segment spans residues 64-84 (WCPAGIMLLALVCLLSCLLPS). The Extracellular portion of the chain corresponds to 85–215 (SEAKLYGRCE…LTEWVDGCDF (131 aa)). Residues 88–215 (KLYGRCELAR…LTEWVDGCDF (128 aa)) enclose the C-type lysozyme domain. Cystine bridges form between cysteine 93–cysteine 213, cysteine 117–cysteine 201, cysteine 151–cysteine 166, and cysteine 162–cysteine 180.

This sequence belongs to the glycosyl hydrolase 22 family. As to quaternary structure, interacts with ASTL. Post-translationally, the processed form derives from the membrane form by proteolytic processing. In terms of tissue distribution, the processed form is expressed in sperm (at protein level). Expressed in testis, epididymis and placenta.

It localises to the cytoplasmic vesicle. Its subcellular location is the secretory vesicle. The protein resides in the acrosome membrane. The protein localises to the secreted. Its function is as follows. Sperm surface membrane protein that may be involved in sperm-egg plasma membrane adhesion and fusion during fertilization. It could be a potential receptor for the egg oligosaccharide residue N-acetylglucosamine, which is present in the extracellular matrix over the egg plasma membrane. The processed form has no detectable bacteriolytic activity in vitro. The polypeptide is Sperm acrosome membrane-associated protein 3 (SPACA3) (Homo sapiens (Human)).